Consider the following 537-residue polypeptide: MTKFIFVTGGVVSGLGKGITSASIGLLMKARGYKTTNIKIDPYINYDAGTMNPYQHGEVFVLDDGGEVDLDLGNYERFLDTSLTFDHNITTGKVYSTVIEKERRGEYLGATVQVIPHITDEIKRRIREIARNYDIVVVEIGGTVGDIESMPFLEAARQMQLEEGRENVAFVHVTYVPKLRVVGEQKTKPTQHSVKELRSLGIQPDAIVARSEDPLEEGARKKISLFTNVPEEAVISAYDVEDTYEVPLLLEREGLGKYLVKRLGLEDREPDLREWEKMVAKYKALQDSVEIAIVGKYVKLTDSYLSIKEALKHASVSNEVKVKIRWIEAEDIEEHGTKLLEGVDGIIVPGGFGARGAEGKIMTIRYARENDIPFLGICFGFQLTVVEFARNVLGMKGAHSTEIDPQTPYPVVDLMPEQRNLDKLGGTMRLGAYPVKIKKGTLAYELYKKDLVYERHRHRWEVNPDYIEAFEKAGLVFSGIAGDDERRMEILELPDKRYFIATQFHPEFKSRPMKPAPVFHGLVKAAKEYKQEKDATH.

Residues 1-265 (MTKFIFVTGG…GKYLVKRLGL (265 aa)) are amidoligase domain. Ser13 is a binding site for CTP. Ser13 contributes to the UTP binding site. 14–19 (GLGKGI) is an ATP binding site. Tyr54 is a binding site for L-glutamine. Asp71 contacts ATP. Asp71 and Glu139 together coordinate Mg(2+). CTP is bound by residues 146–148 (DIE), 186–191 (KTKPTQ), and Lys222. UTP is bound by residues 186–191 (KTKPTQ) and Lys222. Residues 290–532 (EIAIVGKYVK…VKAAKEYKQE (243 aa)) enclose the Glutamine amidotransferase type-1 domain. Gly351 is a binding site for L-glutamine. Catalysis depends on Cys378, which acts as the Nucleophile; for glutamine hydrolysis. Residues 379–382 (FGFQ), Glu402, and Arg459 each bind L-glutamine. Residues His505 and Glu507 contribute to the active site.

Belongs to the CTP synthase family. As to quaternary structure, homotetramer.

The catalysed reaction is UTP + L-glutamine + ATP + H2O = CTP + L-glutamate + ADP + phosphate + 2 H(+). The enzyme catalyses L-glutamine + H2O = L-glutamate + NH4(+). It carries out the reaction UTP + NH4(+) + ATP = CTP + ADP + phosphate + 2 H(+). It functions in the pathway pyrimidine metabolism; CTP biosynthesis via de novo pathway; CTP from UDP: step 2/2. Its activity is regulated as follows. Allosterically activated by GTP, when glutamine is the substrate; GTP has no effect on the reaction when ammonia is the substrate. The allosteric effector GTP functions by stabilizing the protein conformation that binds the tetrahedral intermediate(s) formed during glutamine hydrolysis. Inhibited by the product CTP, via allosteric rather than competitive inhibition. In terms of biological role, catalyzes the ATP-dependent amination of UTP to CTP with either L-glutamine or ammonia as the source of nitrogen. Regulates intracellular CTP levels through interactions with the four ribonucleotide triphosphates. In Pyrococcus abyssi (strain GE5 / Orsay), this protein is CTP synthase.